Reading from the N-terminus, the 82-residue chain is U16-lycotoxin-Ls1a (82 aa).

The first 22 residues, 1-22 (MSPKVQALLLLVGLITFLAVHA), serve as a signal peptide directing secretion. Positions 23 to 34 (EEELSETVESER) are excised as a propeptide. 4 disulfide bridges follow: cysteine 36–cysteine 51, cysteine 43–cysteine 56, cysteine 50–cysteine 67, and cysteine 58–cysteine 65.

This sequence belongs to the neurotoxin 02 (plectoxin) family. 04 (U16-lycotoxin) subfamily. Expressed by the venom gland.

Its subcellular location is the secreted. The protein is U16-lycotoxin-Ls1a of Lycosa singoriensis (Wolf spider).